Here is a 275-residue protein sequence, read N- to C-terminus: Elongation factor Ts (275 aa).

Residues T76 to V79 are involved in Mg(2+) ion dislocation from EF-Tu.

The protein belongs to the EF-Ts family.

The protein localises to the cytoplasm. Functionally, associates with the EF-Tu.GDP complex and induces the exchange of GDP to GTP. It remains bound to the aminoacyl-tRNA.EF-Tu.GTP complex up to the GTP hydrolysis stage on the ribosome. In Rhodococcus jostii (strain RHA1), this protein is Elongation factor Ts.